We begin with the raw amino-acid sequence, 282 residues long: tRNA uridine(34) hydroxylase (282 aa).

Positions E128–Y222 constitute a Rhodanese domain. The Cysteine persulfide intermediate role is filled by C182.

This sequence belongs to the TrhO family.

It carries out the reaction uridine(34) in tRNA + AH2 + O2 = 5-hydroxyuridine(34) in tRNA + A + H2O. Its function is as follows. Catalyzes oxygen-dependent 5-hydroxyuridine (ho5U) modification at position 34 in tRNAs. This is tRNA uridine(34) hydroxylase from Cupriavidus necator (strain ATCC 17699 / DSM 428 / KCTC 22496 / NCIMB 10442 / H16 / Stanier 337) (Ralstonia eutropha).